The primary structure comprises 367 residues: Outer membrane protein assembly factor BamC (367 aa).

The signal sequence occupies residues 1 to 16 (MRLLPLFLMVTLAASG). C17 is lipidated: N-palmitoyl cysteine. C17 carries S-diacylglycerol cysteine lipidation.

The protein belongs to the BamC family. Part of the Bam complex.

It localises to the cell outer membrane. Its function is as follows. Part of the outer membrane protein assembly complex, which is involved in assembly and insertion of beta-barrel proteins into the outer membrane. This Thiobacillus denitrificans (strain ATCC 25259 / T1) protein is Outer membrane protein assembly factor BamC.